A 285-amino-acid polypeptide reads, in one-letter code: ATP synthase gamma chain (285 aa).

This sequence belongs to the ATPase gamma chain family. F-type ATPases have 2 components, CF(1) - the catalytic core - and CF(0) - the membrane proton channel. CF(1) has five subunits: alpha(3), beta(3), gamma(1), delta(1), epsilon(1). CF(0) has three main subunits: a, b and c.

The protein localises to the cell inner membrane. In terms of biological role, produces ATP from ADP in the presence of a proton gradient across the membrane. The gamma chain is believed to be important in regulating ATPase activity and the flow of protons through the CF(0) complex. The chain is ATP synthase gamma chain from Protochlamydia amoebophila (strain UWE25).